An 88-amino-acid polypeptide reads, in one-letter code: ATPase inhibitor mai-1, mitochondrial (88 aa).

Residues 1-18 (MSGSGSGSGAGHGGGSGG) show a composition bias toward gly residues. The tract at residues 1–41 (MSGSGSGSGAGHGGGSGGSIREAGGSLGMMGATREEEYFRR) is disordered. A coiled-coil region spans residues 39-87 (FRRQQKDQLDNLKKKLEADMTQSQQEIRDHEKVLEQHQQRLKEIEKGHG).

It belongs to the ATPase inhibitor family. Post-translationally, does not seem to include a transit peptide.

It localises to the mitochondrion. Functionally, thought to be a regulatory component of the ATP-synthesizing complex in the mitochondria. This Caenorhabditis elegans protein is ATPase inhibitor mai-1, mitochondrial (mai-1).